The sequence spans 189 residues: UPF0301 protein CTA_0231 (189 aa).

The protein belongs to the UPF0301 (AlgH) family.

The polypeptide is UPF0301 protein CTA_0231 (Chlamydia trachomatis serovar A (strain ATCC VR-571B / DSM 19440 / HAR-13)).